The primary structure comprises 343 residues: MGSADDRRFEVLRAIVADFVATKEPIGSKTLVERHNLGVSSATVRNDMAVLEAEGYITQPHTSSGRVPTEKGYREFVDRIDNVKPLSSSERRAILNFLESGVDLDDVLRRAVRLLAQLTRQVAIVQYPTLSTSSVRHLEVVALTPARLLLVVITDTGRVDQRIVELGDAIDEHELSKLRDMLGQAMEGKPLAQASIAVSDLASHLNGSDRLGDAVGRAATVLVETLVEHTEERLLLGGTANLTRNTADFGGSLRSVLEALEEQVVVLRLLAAQQEAGKVTVRIGHETEAEQMAGASVVSTAYGSSGKVYGGMGVVGPTRMDYPGTIANVAAVALYIGEVLGSR.

This sequence belongs to the HrcA family.

Negative regulator of class I heat shock genes (grpE-dnaK-dnaJ and groELS operons). Prevents heat-shock induction of these operons. This is Heat-inducible transcription repressor HrcA from Mycolicibacterium smegmatis (strain ATCC 700084 / mc(2)155) (Mycobacterium smegmatis).